We begin with the raw amino-acid sequence, 130 residues long: Methylglyoxal synthase (130 aa).

The 130-residue stretch at 1–130 (MSKPRIALIA…DLARNMQDVC (130 aa)) folds into the MGS-like domain. Substrate is bound by residues histidine 11, lysine 15, 37 to 40 (TGTT), and 57 to 58 (SG). Residue aspartate 63 is the Proton donor/acceptor of the active site. Position 90 (histidine 90) interacts with substrate.

Belongs to the methylglyoxal synthase family.

The catalysed reaction is dihydroxyacetone phosphate = methylglyoxal + phosphate. Catalyzes the formation of methylglyoxal from dihydroxyacetone phosphate. The sequence is that of Methylglyoxal synthase from Burkholderia vietnamiensis (strain G4 / LMG 22486) (Burkholderia cepacia (strain R1808)).